The primary structure comprises 99 residues: DNA-binding protein HU (99 aa).

The tract at residues 67-86 (REGRNPKTGAKMKIDAYNQP) is disordered.

Belongs to the bacterial histone-like protein family. As to quaternary structure, homodimer.

In terms of biological role, histone-like DNA-binding protein which is capable of wrapping DNA to stabilize it, and thus to prevent its denaturation under extreme environmental conditions. The protein is DNA-binding protein HU (hup) of Rickettsia conorii (strain ATCC VR-613 / Malish 7).